The following is a 272-amino-acid chain: Ribosome maturation factor RimP (272 aa).

The tract at residues 209 to 272 is disordered; the sequence is QNLGILPPPP…RGDIDPPEGD (64 aa). Residues 250–266 are compositionally biased toward basic and acidic residues; sequence NTKEHRLAAERLRRGDI.

This sequence belongs to the RimP family.

The protein resides in the cytoplasm. In terms of biological role, required for maturation of 30S ribosomal subunits. In Rhodopseudomonas palustris (strain BisA53), this protein is Ribosome maturation factor RimP.